Here is a 244-residue protein sequence, read N- to C-terminus: Lymphotoxin-beta (244 aa).

Over Met1–Ser18 the chain is Cytoplasmic. The helical; Signal-anchor for type II membrane protein transmembrane segment at Leu19–Pro48 threads the bilayer. The Extracellular portion of the chain corresponds to Gln49–Gly244. A THD domain is found at Pro88–Val243. An N-linked (GlcNAc...) asparagine glycan is attached at Asn222.

Belongs to the tumor necrosis factor family. Heterotrimer of either two LTB and one LTA subunits or (less prevalent) two LTA and one LTB subunits.

It localises to the membrane. Functionally, cytokine that binds to LTBR/TNFRSF3. May play a specific role in immune response regulation. Provides the membrane anchor for the attachment of the heterotrimeric complex to the cell surface. The chain is Lymphotoxin-beta (LTB) from Pan troglodytes (Chimpanzee).